Consider the following 299-residue polypeptide: tRNA dimethylallyltransferase (299 aa).

8 to 15 (GPTASGKT) provides a ligand contact to ATP. 10–15 (TASGKT) lines the substrate pocket. The segment at 33 to 36 (DSQQ) is interaction with substrate tRNA.

It belongs to the IPP transferase family. In terms of assembly, monomer. Requires Mg(2+) as cofactor.

It carries out the reaction adenosine(37) in tRNA + dimethylallyl diphosphate = N(6)-dimethylallyladenosine(37) in tRNA + diphosphate. Its function is as follows. Catalyzes the transfer of a dimethylallyl group onto the adenine at position 37 in tRNAs that read codons beginning with uridine, leading to the formation of N6-(dimethylallyl)adenosine (i(6)A). The polypeptide is tRNA dimethylallyltransferase (Anaeromyxobacter dehalogenans (strain 2CP-C)).